Reading from the N-terminus, the 100-residue chain is UPF0213 protein YhbQ (100 aa).

The region spanning 2–77 (TPWYLYLIRT…KQLTKRQKER (76 aa)) is the GIY-YIG domain.

Belongs to the UPF0213 family.

The sequence is that of UPF0213 protein YhbQ from Salmonella choleraesuis (strain SC-B67).